The chain runs to 341 residues: Putative amino-acid ABC transporter-binding protein YhdW (341 aa).

An N-terminal signal peptide occupies residues 1–19 (MKKMMIATLAAASVLLAVA).

The protein belongs to the bacterial solute-binding protein 3 family.

The protein resides in the periplasm. Probably part of the binding-protein-dependent transport system YdhWXYZ for an amino acid. The protein is Putative amino-acid ABC transporter-binding protein YhdW (yhdW) of Escherichia coli O157:H7.